We begin with the raw amino-acid sequence, 163 residues long: Transcription elongation factor GreB (163 aa).

Positions 54 to 76 (GKRRMREIDRRIRFLTKRLEAAV) form a coiled coil.

Belongs to the GreA/GreB family. GreB subfamily.

In terms of biological role, necessary for efficient RNA polymerase transcription elongation past template-encoded arresting sites. The arresting sites in DNA have the property of trapping a certain fraction of elongating RNA polymerases that pass through, resulting in locked ternary complexes. Cleavage of the nascent transcript by cleavage factors such as GreA or GreB allows the resumption of elongation from the new 3'terminus. GreB releases sequences of up to 9 nucleotides in length. The chain is Transcription elongation factor GreB from Neisseria meningitidis serogroup A / serotype 4A (strain DSM 15465 / Z2491).